The chain runs to 459 residues: uncharacterized protein (459 aa).

Helical transmembrane passes span 25 to 45, 52 to 72, 95 to 115, 123 to 143, 167 to 187, 192 to 212, 249 to 269, 279 to 299, 310 to 330, 332 to 352, 389 to 409, and 420 to 440; these read SYGF…IYLL, AGIP…FAAI, PYLL…FLSP, LIYA…VNIP, IGSL…LVKF, VGYP…FYIC, VLMT…LVYF, LMAY…VFLP, TAMI…MLPS, VYVF…PNGI, SLSG…PNAV, and ALLL…IGFL.

It belongs to the sodium:galactoside symporter (TC 2.A.2) family.

The protein resides in the cell membrane. This is an uncharacterized protein from Bacillus subtilis (strain 168).